The chain runs to 250 residues: Malonyl-[acyl-carrier protein] O-methyltransferase (250 aa).

It belongs to the methyltransferase superfamily.

The catalysed reaction is malonyl-[ACP] + S-adenosyl-L-methionine = malonyl-[ACP] methyl ester + S-adenosyl-L-homocysteine. It participates in cofactor biosynthesis; biotin biosynthesis. Converts the free carboxyl group of a malonyl-thioester to its methyl ester by transfer of a methyl group from S-adenosyl-L-methionine (SAM). It allows to synthesize pimeloyl-ACP via the fatty acid synthetic pathway. The protein is Malonyl-[acyl-carrier protein] O-methyltransferase of Neorickettsia risticii (strain Illinois).